The chain runs to 67 residues: Probable Sec-independent protein translocase protein TatE (67 aa).

The chain crosses the membrane as a helical span at residues 4 to 21; sequence ISITKLLVVAALVVLLFG.

It belongs to the TatA/E family. TatE subfamily.

The protein resides in the cell inner membrane. In terms of biological role, part of the twin-arginine translocation (Tat) system that transports large folded proteins containing a characteristic twin-arginine motif in their signal peptide across membranes. TatE shares overlapping functions with TatA. In Salmonella dublin (strain CT_02021853), this protein is Probable Sec-independent protein translocase protein TatE.